The sequence spans 128 residues: MTGFRDQLGVHAQALVLRETRNNLLTSNIANAATPHYKARDIDFGAELARASGNGTLRTTEARHFAAGGPAARGEALYRDPVTPSLDGNTVEMAVEQMEFAENTLRYQTSLALLNRRISGLMTAIKGE.

The protein belongs to the flagella basal body rod proteins family. As to quaternary structure, the basal body constitutes a major portion of the flagellar organelle and consists of a number of rings mounted on a central rod. In Gram-negative bacteria, at least four rings, L, P, S and M are present, whereas Gram-positive bacteria lack the L and P rings. The rod consists of about 26 subunits of FlgG in the distal portion, and FlgB, FlgC and FlgF build up the proximal portion of the rod with about 6 subunits each. Rod assembly occurs by export via the flagellum-specific pathway of its constituent proteins and by their incorporation into the rod structure in the probable order of FlgB, FlgC, FlgF and FlgG. Another protein, FliE, also assembles onto the stable rod structure.

It is found in the bacterial flagellum basal body. In terms of biological role, structural component of flagellum, the bacterial motility apparatus. Part of the rod structure of flagellar basal body. This Cereibacter sphaeroides (strain ATCC 17023 / DSM 158 / JCM 6121 / CCUG 31486 / LMG 2827 / NBRC 12203 / NCIMB 8253 / ATH 2.4.1.) (Rhodobacter sphaeroides) protein is Flagellar basal body rod protein FlgB.